Consider the following 103-residue polypeptide: Large ribosomal subunit protein bL21 (103 aa).

This sequence belongs to the bacterial ribosomal protein bL21 family. In terms of assembly, part of the 50S ribosomal subunit. Contacts protein L20.

Functionally, this protein binds to 23S rRNA in the presence of protein L20. The chain is Large ribosomal subunit protein bL21 from Ectopseudomonas mendocina (strain ymp) (Pseudomonas mendocina).